The chain runs to 7119 residues: MLSKASVTTQGARGKYRAELYNEKRSDHVACTVPLCDTDDMACKLTPWFEDGETAFNQVSSILKEKGKILFVPMHMQRAMKFLPGPRVYLVERLTGGMLSKHFLVNQLAYKDQVGAAMMRTTLNAKPLGMFFPYDSSLETGEYTFLLRKNGLGGQLFRERPWDRKETPYVEILDDLEADPTGKYSQNLLKKLIGGDCIPIDQYMCGKNGKPIADYAKIVAKEGLTTLADIEVDVKSRMDSDRFIVLNKKLYRVVWNVTRRNVPYPKQTAFTIVSVVQCDDKDSVPEHTFTIGSQILMVSPLKATNNKNFNLKQRLLYTFYGKDAVQQPGYIYHSAYVDCNACGRGTWCTGNAIQGFACDCGANYSANDVDLQSSGLVPRNALFLANCPCANNGACSHSAAQVYNILDGKACVEVGGKSFTLTFGGVVYAYMGCCDGTMYFVPRAKSCVSRIGDAIFTGCTGTWDKVVETANLFLEKAQRSLNFCQQFALTEVVLAILSGTTSTFEELRDLCHNASYEKVRDHLVNHGFVVTIGDYIRDAINIGANGVCNATINAPFIAFTGLGESFKKVSAIPWKICSNLKSALDYYSSNIMFRVFPYDIPCDVSNFVELLLDCGKLTVATSYFVLRYLDEKFDTVLGTVSSACQTALSSFLNACVAASRATAGFINDMFKLFKVLMHKLYVYTSCGYVAVAEHSSKIVQQVLDIMSKAMKLLHTNVSWAGTKLSAIIYEGREALLFNSGTYFCLSTKAKTLQGQMNLVLPGDYNKKTLGILDPVPNADTIDVNANSTVVDVVHGQLEPTNEHGPSMIVGNYVLVSDKLFVRTEDEEFYPLCTNGKVVSTLFRLKGGMPSKKVTFGDVNTVEVTAYRSVSITYDIHPVLDALLSSSKLATFTVEKDLLVEDFVDVIKDEVLTLLTPLLRGYDIDGFDVEDFIDVPCYVYNQDGDCAWSSNMTFSINPVEDVEEVEEFIEDDYLSDELPIADDEEAWARAVEEVMPLDDILVAEIELEEDPPLETALESVEAEVVETAEAQEPSVESIDSTPSTSTVVGENDLSVKPMSRVAETDDVLELETAVVGGPVSDVTAIVTNDIVSVEQAQQCGVSSLPIQDEASENQVHQVSDLQGNELLCSETKVEIVQPRQDLKPRRSRKSKVDLSKYKHTVINNSVTLVLGDAIQIASLLPKCILVNAANRHLKHGGGIAGVINKASGGDVQEESDEYISNNGPLHVGDSVLLKGHGLADAILHVVGPDARNNEDAALLKRCYKAFNKHTIVVTPLISAGIFSVDPKVSFEYLLANVTTTTYVVVNNEDIYNTLATPSKPDGLVYSFEGWRGTVRTAKNYGFTCFICTEYSANVKFLRTKGVDTTKKIQTVDGVSYYLYSARDALTDVIAAANGCSGICAMPFGYVTHGLDLAQSGNYVRQVKVPYVCLLASKEQIPIMNSDVAIQTPETAFINNVTSNGGYHSWHLVSGDLIVKDVCYKKLLHWSGQTICYADNKFYVVKNDVALPFSDLEACRAYLTSRAAQQVNIEVLVTIDGVNFRTVILNDTTTFRKQLGATFYKGVDISDAFPTVKMGGESLFVADNLSESEKVVLKEYYGTSDVTFLQRYYSLQPLVQQWKFVVHDGVKSLKLSNYNCYINATIMMIDMLHDIKFVVPALQNAYLRYKGGDPYDFLALIMAYGDCTFDNPDDEAKLLHTLLAKAELTVSAKMVWREWCTVCGIRDIEYTGMRACVYAGVNSMEELQSVFNETCVCGSVKHRQLVEHSAPWLLVSGLNEVKVSTSTDPIYRAFNVFQGVETSVGHYVHIRVKDGLFYKYDSGSLTKTSDMKCKMTSVWYPTVRYTADCNVVVYDLDGVTKVEVNPDLSNYYMKDGKYYTSKPTIKYSPATILPGSVYSNSCLVGVDGTPGSDTISKFFNDLLGFDETKPISKKLTYSLLPNEDGDVLLSEFSNYNPVYKKGVMLKGKPILWVNNGVCDSALNKPNRASLRQLYDVAPIVLDNKYTVLQDNTSQLVEHNVPVVDDVPITTRKLIEVKCKGLNKPFVKGNFSFVNDPNGVTVVDTLGLTELRALYVDINTRYIVLRDNNWSSLFKLHTVESGDLQIVAAGGSVTRRARVLLGASSLFASFAKITVTATTAACKTAGRGFCKFVVNYGVLQNMFVFLKMLFFLPFNYLWPKKQPTVDIGVSGLRTAGIVTTNIVKQCGTAAYYMLLGKFKRVDWKATLRLFLLLCTTILLLSSIYHLVLFNQVLSSDVMLEDATGILAIYKEVRSYLGIRTLCDGLVVEYRNTSFDVMEFCSNRSVLCQWCLIGQDSLTRYSALQMLQTHITSYVLNIDWIWFALEFFLAYVLYTSSFNVLLLVVTAQYFFAYTSAFVNWRAYNYIVSGLFFLVTHIPLHGLVRVYNFLACLWFLRKFYSHVINGCKDTACLLCYKRNRLTRVEASTIVCGTKRTFYIAANGGTSYCCKHNWNCVECDTAGVGNTFICTEVANDLTTTLRRLIKPTDQSHYYVDSVVVKDAVVELHYNRDGSSCYERYPLCYFTNLEKLKFKEVCKTPTGIPEHNFLIYDTNDRGQENLARSACVYYSQVLCKPMLLVDVNLVTTVGDSREIAIKMLDSFINSFISLFSVSRDKLEKLINTARDCVRRGDDFQNVLKTFTDAARGHAGVESDVETTMVVDALQYAHKNDIQLTTECYNNYVPGYIKPDSINTLDLGCLIDLKAASVNQTSMRNANGACVWNSGDYMKLSDSFKRQIRIACRKCNIPFRLTTSKLRAADNILSVKFSATKIVGGAPSWLLRVRDLTVKGYCILTLFVFTVAVLSWFCLPSYSIATVNFNDDRILTYKVIENGIVRDIAPNDVCFANKYGHFSKWFNENHGGVYRNSMDCPITIAVIAGVAGARVANVPANLAWVGKQIVLFVSRVFANTNVCFTPINEIPYDTFSDSGCVLSSECTLFRDAEGNLNPFCYDPTVLPGASSYADMKPHVRYDMYDSDMYIKFPEVIVESTLRITKTLATQYCRFGSCEESAAGVCISTNGSWALYNQNYSTRPGIYCGDDYFDIVRRLAISLFQPVTYFQLSTSLAMGLVLCVFLTAAFYYINKVKRALADYTQCAVVAVVAALLNSLCLCFIVANPLLVAPYTAMYYYATFYLTGEPAFIMHISWYVMFGAVVPIWMLASYTVGVMLRHLFWVLAYFSKKHVDVFTDGKLNCSFQDAASNIFVIGKDTYVALRNAITQDSFVRYLSLFNKYKYYSGAMDTASYREACAAHLCKALQTYSETGSDILYQPPNCSVTSSVLQSGLVKMSAPSGAVENCIVQVTCGSMTLNGLWLDNTVWCPRHIMCPADQLTDPNYDALLISKTNHSFIVQKHIGAQANLRVVAHSMVGVLLKLTVDVANPSTPAYTFSTVKPGASFSVLACYNGKPTGVFTVNLRHNSTIKGSFLCGSCGSVGYTENGGVINFVYMHQMELSNGTHTGSSFDGVMYGAFEDKQTHQLQLTDKYCTINVVAWLYAAVLNGCKWFVKPTRVGIVTYNEWALSNQFTEFVGTQSIDMLAHRTGVSVEQMLAAIQSLHAGFQGKTILGQSTLEDEFTPDDVNMQVMGVVMQSGVKRISYGFIHWLISTFVLAYVSVMQLTKFTMWTYLFETIPTQMTPLLLGFMACVMFTVKHKHTFMSLFLLPVALCLTYANIVYEPQTLISSTLIAVANWLTPTSVYMRTTHFDFGLYISLSFVLAIIVRRLYRPSMSNLALALCSGVMWFYTYVIGDHSSPITYLMFITTLTSDYTITVFATVNLAKFISGLVFFYAPHLGFILPEVKLVLLIYLGLGYMCTMYFGVFSLLNLKLRVPLGVYDYSVSTQEFRFLTGNGLHAPRNSWEALILNFKLLGIGGTPCIKVATVQSKLTDLKCTSVVLLTVLQQLHLESNSKAWSYCVKLHNEILAAVDPTEAFERFVCLFATLMSFSANVDLDALANDLFENSSVLQATLTEFSHLATYAELETAQSSYQKALNSGDASPQVLKALQKAVNVAKNAYEKDKAVARKLERMAEQAMTSMYKQARAEDKKAKIVSAMQTMLFGMIKKLDNDVLNGVIANARNGCVPLSIVPLCASNKLRVVIPDISVWNKVVNWPSVSYAGSLWDITVINNVDNEVVKPTDVVETNESLTWPLVIECSRSSSSAVKLQNNEIHPKGLKTMVITAGVDQVNCNSSAVAYYEPVQGHRMVMGLLSENAHLKWAKVEGKDGFINIELQPPCKFLIAGPKGPEIRYLYFVKNLNNLHRGQLLGHIAATVRLQAGANTEFASNSTVLTLVAFAVDPAKAYLDYVGSGGTPLSNYVKMLAPKTGTGVAISVKPEATADQETYGGASVCLYCRAHIEHPDVSGVCKYKTRFVQIPAHVRDPVGFLLKNVPCNVCQYWVGYGCNCDALRNNTVPQSKDTNFLNRVRGSSVNARLEPCSSGLTTDVVYRAFDICNFKARVAGIGKYYKTNTCRFVQVDDEGHKLDSYFIVKRHTMSNYELEKRCYDLLKDCDAVAIHDFFIFDVDKTKTPHIVRQSLTEYTMMDLVYALRHFDQNNCEVLKSILVKYGCCEQSYFDNKLWFDFVENPSVIGVYHKLGERIRQAMLNTVKMCDHMVKSGLVGVLTLDNQDLNGKWYDFGDFVITQPGAGVAIVDSYYSYLMPVLSMTNCLAAETHKDCDFNKPLIEWPLLEYDYTDYKIGLFNKYFKYWDQTYHPNCVNCSDDRCILHCANFNVLFSMVLPNTSFGPIVRKIFVDGVPFIVSCGYHYKELGLVMNMDFNIHRHRLALKELMMYAADPAMHIASASALWDLRTPCFSVAALTTGLTFQTVRPGNFNKDFYDFVVSRGFFKEGSSVTLKHFFFAQDGHAAITDYSYYAYNLPTMVDIKQMLFCMEVVDKYFDIYDGGCLNASEVIVNNLDKSAGHPFNKFGKARVYYESMSYQEQDELFAVTKRNVLPTITQMNLKYAISAKNRARTVAGVSILSTMTNRQYHQKMLKSMAATRGATCVIGTTKFYGGWDFMLKTLYKDVESPHLMGWDYPKCDRAMPNMCRILASLILARKHSTCCTNSDRFYRLANECAQVLSEYVLCGGGYYVKPGGTSSGDATTAYANSVFNILQATTANVSALMSANGNTIIDREIKDMQFDLYINVYRKVVPDPKFVDKYYAFLNKHFSMMILSDDGVVCYNSDYAAKGYVASIQNFKETLYYQNNVFMSEAKCWVETNLEKGPHEFCSQHTLYIKDGDDGYFLPYPDPSRILSAGCFVDDIVKTDGTVMMERYVSLAIDAYPLTKHDDTEYQNVFWVYLQYIEKLYKDLTGHMLDSYSVMLCGDDSAKFWEEGFYRDLYSSPTTLQAVGSCVVCHSQTSLRCGTCIRRPFLCCKCCYDHVIATPHKMVLSVSPYVCNAPGCDVSDVTKLYLGGMSYYCNDHRPVCSFPLCANGLVFGLYKNMCTGSSSIMEFNRLATCDWSDSGDYTLANTTTEPLKLFAAETLRATEEASKQSYAIATIKEIVGERELILVWEVGKSKPPLNRNYVFTGYHLTKNSKVQLGEYVFERIDYSDAVSYKSSTTYKLAVGDIFVLTSHSVATLSAPTIVNQERYLKITGIYPTITVPEEFANHVVNFQKAGFSKYVTVQGPPGTGKSHFAIGLAIYYPTARIVYTACSHAAVDALCEKAFKYLNIAKCSRIIPAKARVECYDRFKVNDTNSQYLFSTVNALPEISVDILVVDEVSMCTNYDLSIINSRVKAKHIVYVGDPAQLPAPRTLLIRGTLEPENFNSVTRLMCNLGPDIFLSVCYRCPKEIVSTVSALVYNNKLSAKKDASGQCFKILFKGSVTHDASSAINRPQLNFVKTFIAANPNWSKAVFISPYNSQNAVARSMLGLTTQTVDSSQGSEYPYVIFCQTADTAHANNLNRFNVAVTRAQKGILCVMTSQVLFDSLEFAELSLNNYKLQSQIVTGLFKDCSREDTGLPPAYAPTYLSVDAKYKTTDELCVNLNITPNVTYSRVISRMGFKLDATIPGYPKLFITRDEAIRQVRSWVGFDVEGAHASRNACGTNVPLQLGFSTGVNFVVQPVGVVDTEWGSMLTTISARPPPGEQFKHLVPLMNKGATWPIVRRRIVQMLSDTLDKLSDYCTFVCWAHGFELTSASYFCKIGKEQRCSMCSRRASTFSSPLQSYACWSHSSGYDYVYNPFFVDVQQWGYVGNLATNHDRYCGIHAGAHVASSDAIMTRCLAIYDCFIERVDWDVTYPYISHEQKLNSCCRTVERNVVRSAVLSGKFEKIYDIGNPKGIAIISEPVEWHFYDAQPLSNKVKKLFYTDDVSKQFEDGLCLFWNCNVSKYPSNAVVCRFDTRVHSEFNLPGCNGGSLYVNKHAFHTPAYDINAFRDLKPLPFFYYSTTPCEVHGSGNMLEDIDYVPLKSAVCITACNLGGAVCRKHAAEYRDYMEAYNIVSAAGFRLWVYKTFDIYNLWSTFVKVQGLENIAFNVIKQGHFTGVDGELPVAVVNDKIFTKNGTDDVCIFKNETALPTNVAFELYAKRAVRSHPDLNLLRNLEVDVCYNFVLWDYDRNNIYGTTTIGVCKYTDIDVNPNLNMCFDIRDKGSLERFMSMPNGVLISDRKIKNYPCISGPKHAYFNGAILRNIDAKQPVIFYLYKKVNNEFVSFSDTFYTCGRTVGDFTVLTPMEEDFLVLDSDVFIKKYGLEDYAFEHVVYGDFSHTTLGGLHLLIGLYKKMREGHILMEEMLKDRATVHNYFITDSNTASYKAVCSVIDLRLDDFVTIIKEMDLDVVSKVVKVPIDLTMIEFMLWCRDGKVQTFYPRLQATNDWKPGLTMPSLFKVQQMNLEPCLLANYKQSIPMPNGVHMNVAKYMQLCQYLNTCTLAVPANMRVIHFGAGCEKGVAPGTSVLRQWLPLDAVLIDNDLNEFVSDADITIFGDCVTVHVGQQVDLLISDMYDPCTKAVGEVNQTKALFFVYLCNFIKNNLALGGSVAIKITEHSWSADLYKIMGRFAYWTVFCTNANASSSEGFLIGINFLGELKEEIDGNVMHANYIFWRNSTPMNLSTYSLFDLSRFPLKLKGTPVLQLKESQINELVISLLSQGKLLIRDNDTLNVSTDVLVNFRKRL.

The CoV Nsp1 globular domain occupies 25–151 (RSDHVACTVP…EYTFLLRKNG (127 aa)). In terms of domain architecture, BetaCoV Nsp1 C-terminal spans 167 to 195 (TPYVEILDDLEADPTGKYSQNLLKKLIGG). The CoV Nsp2 N-terminal domain occupies 197–472 (CIPIDQYMCG…WDKVVETANL (276 aa)). Zn(2+) contacts are provided by Cys-339, Cys-342, Cys-358, and Cys-360. Residues 339-360 (CNACGRGTWCTGNAIQGFACDC) form a C4 region. Positions 478-712 (QRSLNFCQQF…LDIMSKAMKL (235 aa)) constitute a CoV Nsp2 middle domain. Positions 714-847 (HTNVSWAGTK…VSTLFRLKGG (134 aa)) constitute a CoV Nsp2 C-terminal domain. One can recognise a Ubiquitin-like 1 domain in the interval 851–960 (KKVTFGDVNT…MTFSINPVED (110 aa)). Macro domains lie at 1152 to 1321 (DLSK…KPDG) and 1322 to 1446 (LVYS…AIQT). The DPUP domain occupies 1446–1519 (TPETAFINNV…LEACRAYLTS (74 aa)). Positions 1524–1579 (QVNIEVLVTIDGVNFRTVILNDTTTFRKQLGATFYKGVDISDAFPTVKMGGESLFV) constitute a Ubiquitin-like 2 domain. A Peptidase C16 domain is found at 1593-1864 (EYYGTSDVTF…KVEVNPDLSN (272 aa)). Catalysis depends on Cys-1634, which acts as the For PL-PRO activity. The Zn(2+) site is built by Cys-1714, Cys-1717, Cys-1749, and Cys-1751. The C4-type zinc-finger motif lies at 1714–1751 (CTVCGIRDIEYTGMRACVYAGVNSMEELQSVFNETCVC). Catalysis depends on for PL-PRO activity residues His-1800 and Asp-1815. A Nucleic acid-binding domain is found at 1878 to 1995 (TIKYSPATIL…QLYDVAPIVL (118 aa)). The G2M domain maps to 2012–2133 (HNVPVVDDVP…AKITVTATTA (122 aa)). A run of 3 helical transmembrane segments spans residues 2112-2132 (VLLG…TATT), 2145-2165 (FVVN…LFFL), and 2222-2242 (LFLL…LVLF). The interval 2112–2395 (VLLGASSLFA…VTHIPLHGLV (284 aa)) is HD1. A 3Ecto domain is found at 2259–2325 (LAIYKEVRSY…LQMLQTHITS (67 aa)). 2 disulfide bridges follow: Cys-2275–Cys-2303 and Cys-2293–Cys-2300. A run of 3 helical transmembrane segments spans residues 2326–2346 (YVLN…YVLY), 2350–2370 (FNVL…SAFV), and 2375–2395 (YNYI…HGLV). The Y1 stretch occupies residues 2409 to 2499 (KFYSHVINGC…TLRRLIKPTD (91 aa)). The region spanning 2409-2782 (KFYSHVINGC…LSVKFSATKI (374 aa)) is the CoV Nsp3 Y domain. 8 residues coordinate Zn(2+): His-2413, Cys-2418, Cys-2423, Cys-2426, Cys-2459, His-2462, Cys-2466, and Cys-2469. The tract at residues 2413 to 2426 (HVINGCKDTACLLC) is ZF1. Residues 2459-2469 (CCKHNWNCVEC) form a ZF2 region. Residues 2500-2598 (QSHYYVDSVV…LVDVNLVTTV (99 aa)) are Y2. Residues 2500–2782 (QSHYYVDSVV…LSVKFSATKI (283 aa)) are coV-Y. The Y3 stretch occupies residues 2599–2681 (GDSREIAIKM…DALQYAHKND (83 aa)). The interval 2682-2782 (IQLTTECYNN…LSVKFSATKI (101 aa)) is Y4. A run of 4 helical transmembrane segments spans residues 2800–2820 (GYCI…FCLP), 3072–3092 (STSL…FYYI), 3105–3125 (CAVV…FIVA), and 3149–3169 (AFIM…IWML). The segment at 2800-3169 (GYCILTLFVF…FGAVVPIWML (370 aa)) is HD2. Positions 3195–3291 (VFTDGKLNCS…NCSVTSSVLQ (97 aa)) constitute a Nsp4C domain. Positions 3292 to 3597 (SGLVKMSAPS…NMQVMGVVMQ (306 aa)) constitute a Peptidase C30 domain. Residues His-3332 and Cys-3439 each act as for 3CL-PRO activity in the active site. Helical transmembrane passes span 3603 to 3623 (ISYG…VSVM), 3637 to 3657 (TIPT…MFTV), 3662 to 3682 (TFMS…NIVY), 3707 to 3727 (RTTH…AIIV), 3735 to 3755 (MSNL…YVIG), 3784 to 3804 (LAKF…FILP), and 3808 to 3828 (LVLL…GVFS). Positions 3603–3828 (ISYGFIHWLI…MCTMYFGVFS (226 aa)) are HD3. In terms of domain architecture, RdRp Nsp7 cofactor spans 3890 to 3972 (SKLTDLKCTS…DLFENSSVLQ (83 aa)). Residues 3973–4171 (ATLTEFSHLA…RSSSSAVKLQ (199 aa)) enclose the RdRp Nsp8 cofactor domain. In terms of domain architecture, Nsp9 ssRNA-binding spans 4172-4281 (NNEIHPKGLK…GHIAATVRLQ (110 aa)). Residues 4282 to 4420 (AGANTEFASN…DALRNNTVPQ (139 aa)) form the ExoN/MTase coactivator domain. Positions 4355, 4358, 4364, 4371, 4397, 4400, 4408, and 4410 each coordinate Zn(2+). Zinc fingers lie at residues 4355–4371 (CLYC…SGVC) and 4397–4410 (CNVC…GCNC). Residues 4426 to 4683 (FLNRVRGSSV…AAETHKDCDF (258 aa)) enclose the NiRAN domain. Mn(2+) is bound by residues Asn-4631 and Asp-4640. Positions 4688-4786 (IEWPLLEYDY…MNMDFNIHRH (99 aa)) constitute a Nsp12 Interface domain. Residues His-4717, Cys-4723, Cys-4728, Cys-4732, and Cys-4909 each contribute to the Zn(2+) site. Residues 4787–5354 (RLALKELMMY…DLYSSPTTLQ (568 aa)) enclose the Nsp12 RNA-dependent RNA polymerase domain. The tract at residues 4789–5003 (ALKELMMYAA…HQKMLKSMAA (215 aa)) is rdRp Fingers N-ter. The interval 5004–5042 (TRGATCVIGTTKFYGGWDFMLKTLYKDVESPHLMGWDYP) is rdRp Palm N-ter. In terms of domain architecture, RdRp catalytic spans 5034-5196 (PHLMGWDYPK…CYNSDYAAKG (163 aa)). A rdRp Fingers C-ter region spans residues 5043 to 5101 (KCDRAMPNMCRILASLILARKHSTCCTNSDRFYRLANECAQVLSEYVLCGGGYYVKPGG). Zn(2+)-binding residues include His-5064, Cys-5067, and Cys-5068. Residues 5102–5237 (TSSGDATTAY…EKGPHEFCSQ (136 aa)) form a rdRp Palm C-ter region. Active-site residues include Ser-5181, Asp-5182, and Asp-5183. Positions 5238 to 5354 (HTLYIKDGDD…DLYSSPTTLQ (117 aa)) are rdRp Thumb. The CV ZBD domain maps to 5355–5467 (AVGSCVVCHS…MEFNRLATCD (113 aa)). The Zn(2+) site is built by Cys-5359, Cys-5362, Cys-5370, Cys-5373, Cys-5380, Cys-5383, His-5387, His-5393, Cys-5404, Cys-5409, Cys-5426, and His-5429. In terms of domain architecture, (+)RNA virus helicase ATP-binding spans 5611 to 5792 (TVPEEFANHV…MCNLGPDIFL (182 aa)). Residue 5636–5643 (GPPGTGKS) participates in ATP binding. Residues 5793 to 5967 (SVCYRCPKEI…GLFKDCSRED (175 aa)) enclose the (+)RNA virus helicase C-terminal domain. The ExoN domain maps to 6024–6239 (LFITRDEAIR…RCLAIYDCFI (216 aa)). Catalysis depends on residues Asp-6042, Glu-6044, and Glu-6143. Cys-6159, Cys-6162, Cys-6178, His-6181, His-6209, Cys-6213, and His-6216 together coordinate Zn(2+). Active-site residues include His-6220 and Asp-6225. Cys-6231 provides a ligand contact to Zn(2+). The N7-MTase domain occupies 6248-6475 (YPYISHEQKL…NLWSTFVKVQ (228 aa)). 6283-6289 (DIGNPKG) contacts S-adenosyl-L-methionine. The gpppA-binding stretch occupies residues 6361-6375 (CNGGSLYVNKHAFHT). Residues Cys-6399, Cys-6421, Cys-6432, and His-6435 each contribute to the Zn(2+) site. Residues 6476 to 6536 (GLENIAFNVI…NVAFELYAKR (61 aa)) form the Nsp15 N-terminal oligomerization domain. An AV-Nsp11N/CoV-Nsp15M domain is found at 6537-6658 (AVRSHPDLNL…LYKKVNNEFV (122 aa)). Positions 6675–6814 (TVLTPMEEDF…RDGKVQTFYP (140 aa)) constitute a NendoU domain. Catalysis depends on residues His-6705, His-6720, Lys-6760, Lys-6863, Asp-6947, Lys-6987, and Glu-7020. Residues 6819-7113 (TNDWKPGLTM…TLNVSTDVLV (295 aa)) enclose the Nidovirus-type SAM-dependent 2'-O-MTase domain.

This sequence belongs to the coronaviruses polyprotein 1ab family. As to quaternary structure, interacts with host PHB and PHB2. Interacts with papain-like protease nsp3 and non-structural protein 6. In terms of assembly, monomer. Homodimer. Only the homodimer shows catalytic activity. As to quaternary structure, interacts with nsp8 and nsp12 to form the replication-transcription complex (RTC): nsp12, nsp7, two subunits of nsp8, and up to two subunits of nsp13. Interacts with nsp7, nsp13 and nsp12 to form the replication-transcription complex (RTC): nsp12, nsp7, two subunits of nsp8, and up to two subunits of nsp13. In terms of assembly, interacts with nsp12. As to quaternary structure, interacts with proofreading exoribonuclease nsp14 and 2'-O-methyltransferase nsp16; these interactions enhance nsp14 and nsp16 enzymatic activities. Interacts with nsp7 and nsp8 to form the replication-transcription complex (RTC): nsp12, nsp7, two subunits of nsp8, and up to two subunits of nsp13. Interacts with nsp9. In terms of assembly, interacts with nsp8 to form the replication-transcription complex (RTC): nsp12, nsp7, two subunits of nsp8, and up to two subunits of nsp13. The cofactor is Mn(2+). Requires Mg(2+) as cofactor. In terms of processing, specific enzymatic cleavages in vivo by its own proteases yield mature proteins. 3CL-PRO and PL-PRO proteinases are autocatalytically processed.

It is found in the host membrane. The protein resides in the host cytoplasm. It localises to the host perinuclear region. The protein localises to the host endoplasmic reticulum-Golgi intermediate compartment. The catalysed reaction is RNA(n) + a ribonucleoside 5'-triphosphate = RNA(n+1) + diphosphate. The enzyme catalyses ATP + H2O = ADP + phosphate + H(+). It catalyses the reaction Thiol-dependent hydrolysis of ester, thioester, amide, peptide and isopeptide bonds formed by the C-terminal Gly of ubiquitin (a 76-residue protein attached to proteins as an intracellular targeting signal).. It carries out the reaction a 5'-end (N(7)-methyl 5'-triphosphoguanosine)-ribonucleoside in mRNA + S-adenosyl-L-methionine = a 5'-end (N(7)-methyl 5'-triphosphoguanosine)-(2'-O-methyl-ribonucleoside) in mRNA + S-adenosyl-L-homocysteine + H(+). The catalysed reaction is uridylyl-uridylyl-ribonucleotide-RNA = a 3'-end uridylyl-2',3'-cyclophospho-uridine-RNA + a 5'-end dephospho-ribonucleoside-RNA. The enzyme catalyses a 5'-end diphospho-ribonucleoside in mRNA + GTP + H(+) = a 5'-end (5'-triphosphoguanosine)-ribonucleoside in mRNA + diphosphate. It catalyses the reaction a 5'-end (5'-triphosphoguanosine)-ribonucleoside in mRNA + S-adenosyl-L-methionine = a 5'-end (N(7)-methyl 5'-triphosphoguanosine)-ribonucleoside in mRNA + S-adenosyl-L-homocysteine. Its function is as follows. The replicase polyprotein of coronaviruses is a multifunctional protein: it contains the activities necessary for the transcription of negative stranded RNA, leader RNA, subgenomic mRNAs and progeny virion RNA as well as proteinases responsible for the cleavage of the polyprotein into functional products. In terms of biological role, inhibits host translation by interacting with the 40S ribosomal subunit. The nsp1-40S ribosome complex further induces an endonucleolytic cleavage near the 5'UTR of host mRNAs, targeting them for degradation. Viral mRNAs are not susceptible to nsp1-mediated endonucleolytic RNA cleavage thanks to the presence of a 5'-end leader sequence and are therefore protected from degradation. By suppressing host gene expression, nsp1 facilitates efficient viral gene expression in infected cells and evasion from host immune response. Functionally, may play a role in the modulation of host cell survival signaling pathway by interacting with host PHB and PHB2. Indeed, these two proteins play a role in maintaining the functional integrity of the mitochondria and protecting cells from various stresses. Responsible for the cleavages located at the N-terminus of the replicase polyprotein. In addition, PL-PRO possesses a deubiquitinating/deISGylating activity and processes both 'Lys-48'- and 'Lys-63'-linked polyubiquitin chains from cellular substrates. Participates together with nsp4 in the assembly of virally-induced cytoplasmic double-membrane vesicles necessary for viral replication. Antagonizes innate immune induction of type I interferon by blocking the phosphorylation, dimerization and subsequent nuclear translocation of host IRF3. Also prevents host NF-kappa-B signaling. Its function is as follows. Participates in the assembly of virally-induced cytoplasmic double-membrane vesicles necessary for viral replication. In terms of biological role, cleaves the C-terminus of replicase polyprotein at 11 sites. Recognizes substrates containing the core sequence [ILMVF]-Q-|-[SGACN]. Also able to bind an ADP-ribose-1''-phosphate (ADRP). Functionally, plays a role in the initial induction of autophagosomes from host endoplasmic reticulum. Later, limits the expansion of these phagosomes that are no longer able to deliver viral components to lysosomes. Forms a hexadecamer with nsp8 (8 subunits of each) that may participate in viral replication by acting as a primase. Alternatively, may synthesize substantially longer products than oligonucleotide primers. Its function is as follows. Forms a hexadecamer with nsp7 (8 subunits of each) that may participate in viral replication by acting as a primase. Alternatively, may synthesize substantially longer products than oligonucleotide primers. In terms of biological role, forms a primer, NSP9-pU, which is utilized by the polymerase for the initiation of RNA chains. Interacts with ribosome signal recognition particle RNA (SRP). Together with NSP8, suppress protein integration into the cell membrane, thereby disrupting host immune defenses. Functionally, plays a pivotal role in viral transcription by stimulating both nsp14 3'-5' exoribonuclease and nsp16 2'-O-methyltransferase activities. Therefore plays an essential role in viral mRNAs cap methylation. RNA-directed RNA polymerase that catalyzes the transcription of viral genomic and subgenomic RNAs. Acts in complex with nsp7 and nsp8 to transcribe both the minus and positive strands of genomic RNA. The kinase-like NiRAN domain of NSP12 attaches one or more nucleotides to the amino terminus of NSP9, forming a covalent RNA-protein intermediate that serves as transcription/replication primer. Subgenomic RNAs (sgRNAs) are formed by discontinuous transcription: The polymerase has the ability to pause at transcription-regulating sequences (TRS) and jump to the leader TRS, resulting in a major deletion. This creates a series of subgenomic RNAs that are replicated, transcribed and translated. In addition, Nsp12 is a subunit of the viral RNA capping enzyme that catalyzes the RNA guanylyltransferase reaction for genomic and sub-genomic RNAs. Subsequently, the NiRAN domain transfers RNA to GDP, and forms the core cap structure GpppA-RNA. Its function is as follows. RNA-directed RNA polymerase that catalyzes the transcription of viral genomic and subgenomic RNAs. Acts in complex with nsp7 and nsp8 to transcribe both the minus and positive strands of genomic RNA. Subgenomic RNAs (sgRNAs) are formed by discontinuous transcription: The polymerase has the ability to pause at transcription-regulating sequences (TRS) and jump to the leader TRS, resulting in a major deletion. This creates a series of subgenomic RNAs that are replicated, transcribed and translated. In addition, Nsp12 is a subunit of the viral RNA capping enzyme that catalyzes the RNA guanylyltransferase reaction for genomic and sub-genomic RNAs. The kinase-like NiRAN domain of NSP12 transfers RNA to the amino terminus of NSP9, forming a covalent RNA-protein intermediate. Subsequently, the NiRAN domain transfers RNA to GDP, and forms the core cap structure GpppA-RNA. In terms of biological role, multi-functional protein with a zinc-binding domain in N-terminus displaying RNA and DNA duplex-unwinding activities with 5' to 3' polarity. Activity of helicase is dependent on magnesium. Functionally, plays a role in viral RNA synthesis through two distinct activities. The N7-guanine methyltransferase activity plays a role in the formation of the cap structure GpppA-RNA. The proofreading exoribonuclease reduces the sensitivity of the virus to RNA mutagens during replication. This activity acts on both ssRNA and dsRNA in a 3'-5' direction. Plays a role in viral transcription/replication and prevents the simultaneous activation of host cell dsRNA sensors, such as MDA5/IFIH1, OAS, and PKR. Acts by degrading the 5'-polyuridines generated during replication of the poly(A) region of viral genomic and subgenomic RNAs. Catalyzes a two-step reaction in which a 2'3'-cyclic phosphate (2'3'-cP) is first generated by 2'-O transesterification, which is then hydrolyzed to a 3'-phosphate (3'-P). If not degraded, poly(U) RNA would hybridize with poly(A) RNA tails and activate host dsRNA sensors. Its function is as follows. Methyltransferase that mediates mRNA cap 2'-O-ribose methylation to the 5'-cap structure of viral mRNAs. N7-methyl guanosine cap is a prerequisite for binding of nsp16. Therefore plays an essential role in viral mRNAs cap methylation which is essential to evade immune system. The protein is Replicase polyprotein 1ab (rep) of Tylonycteris pachypus (Lesser bamboo bat).